We begin with the raw amino-acid sequence, 362 residues long: Alpha-tubulin N-acetyltransferase (362 aa).

An N-acetyltransferase domain is found at 1 to 177 (MQFGCNVAEA…NNFLMLDASI (177 aa)). Acetyl-CoA contacts are provided by residues 111-124 (FYTH…GIGT) and 147-156 (SPKLLAFLSK).

Belongs to the acetyltransferase ATAT1 family.

It catalyses the reaction L-lysyl-[alpha-tubulin] + acetyl-CoA = N(6)-acetyl-L-lysyl-[alpha-tubulin] + CoA + H(+). Its function is as follows. Specifically acetylates 'Lys-40' in alpha-tubulin on the lumenal side of microtubules. Promotes microtubule destabilization and accelerates microtubule dynamics; this activity may be independent of acetylation activity. Acetylates alpha-tubulin with a slow enzymatic rate, due to a catalytic site that is not optimized for acetyl transfer. Enters the microtubule through each end and diffuses quickly throughout the lumen of microtubules. Acetylates only long/old microtubules because of its slow acetylation rate since it does not have time to act on dynamically unstable microtubules before the enzyme is released. This chain is Alpha-tubulin N-acetyltransferase, found in Giardia intestinalis (strain ATCC 50803 / WB clone C6) (Giardia lamblia).